A 437-amino-acid polypeptide reads, in one-letter code: Putative ABC transporter ATP-binding protein CTC_00753 (437 aa).

2 ABC transporter domains span residues 1 to 143 and 179 to 416; these read MERE…LPTI and LKFK…QISK. 219-226 provides a ligand contact to ATP; the sequence is GENGAGKS.

Belongs to the ABC transporter superfamily.

The protein resides in the cell membrane. Functionally, probably part of an ABC transporter complex. Responsible for energy coupling to the transport system. The sequence is that of Putative ABC transporter ATP-binding protein CTC_00753 from Clostridium tetani (strain Massachusetts / E88).